Here is a 100-residue protein sequence, read N- to C-terminus: Urease subunit gamma (100 aa).

It belongs to the urease gamma subunit family. As to quaternary structure, heterotrimer of UreA (gamma), UreB (beta) and UreC (alpha) subunits. Three heterotrimers associate to form the active enzyme.

It localises to the cytoplasm. The catalysed reaction is urea + 2 H2O + H(+) = hydrogencarbonate + 2 NH4(+). The protein operates within nitrogen metabolism; urea degradation; CO(2) and NH(3) from urea (urease route): step 1/1. The chain is Urease subunit gamma from Cereibacter sphaeroides (strain ATCC 17029 / ATH 2.4.9) (Rhodobacter sphaeroides).